The sequence spans 165 residues: MQAETILEGLEAGLPQAVSSGLSLVPAPGLVLTCLSAPSGPGGMALEPPPTTLRKAFLAQSTLLESTLEGAPEWAAPHPEEQRRSPPACSQHTPPLPSTPTGPPPCSPGGNHPLCALSGRGGGRCSIPSLSSSSTFSLFSSGCWNPRVKLRVRKSQSQGRAGQLI.

The tract at residues 68-107 (LEGAPEWAAPHPEEQRRSPPACSQHTPPLPSTPTGPPPCS) is disordered. Positions 94 to 107 (PPLPSTPTGPPPCS) are enriched in pro residues.

This is an uncharacterized protein from Homo sapiens (Human).